A 519-amino-acid polypeptide reads, in one-letter code: U3 small nucleolar RNA-associated protein 15 homolog (519 aa).

Ala-2 carries the post-translational modification N-acetylalanine. WD repeat units lie at residues 36–75, 78–117, 120–159, 162–202, 204–242, 246–285, and 287–326; these read KEFG…PIKT, RFKD…PLRQ, GHTK…EILT, EHSD…SVIS, EHGQ…QLLV, NHHK…VVHS, and DYTA…KKDS. Residue Lys-249 forms a Glycyl lysine isopeptide (Lys-Gly) (interchain with G-Cter in SUMO2) linkage.

Part of the small subunit (SSU) processome, composed of more than 70 proteins and the RNA chaperone small nucleolar RNA (snoRNA) U3. May be a component of the proposed t-UTP subcomplex of the ribosomal small subunit (SSU) processome containing at least UTP4, WDR43, HEATR1, UTP15, WDR75. Interacts directly with UTP4 and WDR43.

Its subcellular location is the nucleus. It is found in the nucleolus. Ribosome biogenesis factor. Involved in nucleolar processing of pre-18S ribosomal RNA. Required for optimal pre-ribosomal RNA transcription by RNA polymerase I. Part of the small subunit (SSU) processome, first precursor of the small eukaryotic ribosomal subunit. During the assembly of the SSU processome in the nucleolus, many ribosome biogenesis factors, an RNA chaperone and ribosomal proteins associate with the nascent pre-rRNA and work in concert to generate RNA folding, modifications, rearrangements and cleavage as well as targeted degradation of pre-ribosomal RNA by the RNA exosome. The polypeptide is U3 small nucleolar RNA-associated protein 15 homolog (Bos taurus (Bovine)).